A 207-amino-acid polypeptide reads, in one-letter code: Outer-membrane lipoprotein LolB (207 aa).

A signal peptide spans 1-21; it reads MPLPDFRFIRLLPLAALVLTA. Cys-22 carries N-palmitoyl cysteine lipidation. Residue Cys-22 is the site of S-diacylglycerol cysteine attachment.

The protein belongs to the LolB family. In terms of assembly, monomer.

The protein resides in the cell outer membrane. In terms of biological role, plays a critical role in the incorporation of lipoproteins in the outer membrane after they are released by the LolA protein. This is Outer-membrane lipoprotein LolB from Escherichia coli O6:K15:H31 (strain 536 / UPEC).